The following is a 957-amino-acid chain: Melanoma-associated antigen E1 (957 aa).

The segment at 1 to 455 is disordered; the sequence is MSLVSQNSRR…DSEGPKGAEG (455 aa). Composition is skewed to polar residues over residues 85-96 and 104-130; these read SEASSASGQPTI and VLPT…SVTL. Residues 138 to 162 are compositionally biased toward low complexity; that stretch reads TSRPPTSSEEPSTSVPPTASEVPST. 5 stretches are compositionally biased toward polar residues: residues 219 to 244, 268 to 320, 329 to 344, 364 to 380, and 414 to 428; these read GLST…TEGL, PSTS…STSV, STSV…STSV, LSTS…DTSV, and TLFS…NPSK. MAGE domains are found at residues 491 to 690 and 745 to 936; these read MEQN…YNEA and LESK…YREA. The tract at residues 743 to 957 is interaction with DTNA; it reads SRLESKARKL…HRQIFVHNFR (215 aa).

In terms of assembly, interacts with DTNA. Interacts with TRIM28.

The protein resides in the cytoplasm. The protein localises to the perinuclear region. It is found in the nucleus. Its subcellular location is the cell membrane. Functionally, may enhance ubiquitin ligase activity of RING-type zinc finger-containing E3 ubiquitin-protein ligases. Proposed to act through recruitment and/or stabilization of the Ubl-conjugating enzyme (E2) at the E3:substrate complex. This chain is Melanoma-associated antigen E1 (MAGEE1), found in Homo sapiens (Human).